Reading from the N-terminus, the 62-residue chain is uncharacterized protein (62 aa).

A disordered region spans residues 1–26 (MGELAASANHGHSPCYPERKGTPGDL). Residues 17-26 (PERKGTPGDL) are compositionally biased toward basic and acidic residues.

This is an uncharacterized protein from Homo sapiens (Human).